We begin with the raw amino-acid sequence, 543 residues long: MAKELIFGKDARTRLLQGINKIANAVKVTVGPKGQNVILERKFANPLITNDGVTIAKEIELSDPVENIGAKVISVAAVSTNDIAGDGTTTATILAQEMTNRGIEIINKGANPVNIRRGIEDASLLIIKELEKYSKKINTNEEIEQVAAISSGSKEIGKLIAQAMALVGKNGVITTDDAKTINTTLETTEGIEFKGTYASPYMVSDQEKMEVVLEQPKILVSSLKINTIKEILPLLEGSVENGNPLLIVAPDFAEEVVTTLAVNKLRGTINVVAVKCNEYGERQKAALEDLAISSGTLAYNNEINSGFKDVTVDNLGDARKVQIAKEKTTVIGGKGNKDKIKKHVELLNGRLKQTTDKYDSDLIKERIAYLSQGVAVIRVGGATELAQKELKLRIEDALNSTKAAVEEGIIAGGGVGLLNASCVLTNSKLKERYENETSVENIKEILLGFEIVQKSLEAPARQIIQNSGVDPVKILSELKNEKTGVGFDAETKKKVDMIANGIIDPTKVTKTALEKAASVASSLITTNVAVYDVKERKDNSFSE.

Residues 29 to 32 (TVGP), 86 to 90 (DGTTT), Gly-413, and Asp-504 contribute to the ATP site.

The protein belongs to the chaperonin (HSP60) family. As to quaternary structure, forms a cylinder of 14 subunits composed of two heptameric rings stacked back-to-back. Interacts with the co-chaperonin GroES.

It is found in the cytoplasm. It catalyses the reaction ATP + H2O + a folded polypeptide = ADP + phosphate + an unfolded polypeptide.. Functionally, together with its co-chaperonin GroES, plays an essential role in assisting protein folding. The GroEL-GroES system forms a nano-cage that allows encapsulation of the non-native substrate proteins and provides a physical environment optimized to promote and accelerate protein folding. In Mycoplasma genitalium (strain ATCC 33530 / DSM 19775 / NCTC 10195 / G37) (Mycoplasmoides genitalium), this protein is Chaperonin GroEL.